Reading from the N-terminus, the 132-residue chain is Large ribosomal subunit protein bL21 (132 aa).

The interval 112-132 (AEKPARKPRAKKTNEVTTDGA) is disordered.

This sequence belongs to the bacterial ribosomal protein bL21 family. As to quaternary structure, part of the 50S ribosomal subunit. Contacts protein L20.

In terms of biological role, this protein binds to 23S rRNA in the presence of protein L20. This Dehalococcoides mccartyi (strain ATCC BAA-2266 / KCTC 15142 / 195) (Dehalococcoides ethenogenes (strain 195)) protein is Large ribosomal subunit protein bL21.